A 378-amino-acid polypeptide reads, in one-letter code: Chorismate synthase (378 aa).

Arg-50 serves as a coordination point for NADP(+). FMN contacts are provided by residues Arg-127–Ser-129, Asn-255–Ala-256, Gly-300, Lys-315–Ser-319, and Arg-342.

This sequence belongs to the chorismate synthase family. FMNH2 serves as cofactor.

It catalyses the reaction 5-O-(1-carboxyvinyl)-3-phosphoshikimate = chorismate + phosphate. Its pathway is metabolic intermediate biosynthesis; chorismate biosynthesis; chorismate from D-erythrose 4-phosphate and phosphoenolpyruvate: step 7/7. Its function is as follows. Catalyzes the anti-1,4-elimination of the C-3 phosphate and the C-6 proR hydrogen from 5-enolpyruvylshikimate-3-phosphate (EPSP) to yield chorismate, which is the branch point compound that serves as the starting substrate for the three terminal pathways of aromatic amino acid biosynthesis. This reaction introduces a second double bond into the aromatic ring system. The protein is Chorismate synthase of Methanocaldococcus jannaschii (strain ATCC 43067 / DSM 2661 / JAL-1 / JCM 10045 / NBRC 100440) (Methanococcus jannaschii).